The chain runs to 342 residues: Foldase protein PrsA (342 aa).

The signal sequence occupies residues 1–22 (MVSVKKIVASALVGVLMFSAVG). Residue Cys23 is the site of N-palmitoyl cysteine attachment. Residue Cys23 is the site of S-diacylglycerol cysteine attachment. One can recognise a PpiC domain in the interval 189–284 (DSGVLTKHLL…FGYHIIQAGA (96 aa)).

The protein belongs to the PrsA family.

The protein resides in the cell membrane. It carries out the reaction [protein]-peptidylproline (omega=180) = [protein]-peptidylproline (omega=0). In terms of biological role, plays a major role in protein secretion by helping the post-translocational extracellular folding of several secreted proteins. The chain is Foldase protein PrsA from Clostridium perfringens (strain ATCC 13124 / DSM 756 / JCM 1290 / NCIMB 6125 / NCTC 8237 / Type A).